The primary structure comprises 399 residues: Na(+)/H(+) antiporter NhaA (399 aa).

The next 11 helical transmembrane spans lie at 12-32 (LDIA…IAAN), 60-80 (LLLW…GLEI), 94-114 (LAAL…LIYA), 126-146 (GWAI…TLLG), 155-175 (IFLT…IAFF), 178-198 (ASLS…LIGL), 206-226 (LWPY…SGVH), 263-283 (PWVT…VSLA), 284-304 (GLPP…GLFL), 336-356 (GVAL…TLAF), and 372-392 (LGVL…LRLS).

The protein belongs to the NhaA Na(+)/H(+) (TC 2.A.33) antiporter family.

It localises to the cell inner membrane. The catalysed reaction is Na(+)(in) + 2 H(+)(out) = Na(+)(out) + 2 H(+)(in). Its function is as follows. Na(+)/H(+) antiporter that extrudes sodium in exchange for external protons. The protein is Na(+)/H(+) antiporter NhaA of Rhodospirillum rubrum (strain ATCC 11170 / ATH 1.1.1 / DSM 467 / LMG 4362 / NCIMB 8255 / S1).